The chain runs to 140 residues: D-ribose pyranase (140 aa).

The Proton donor role is filled by histidine 20. Substrate-binding positions include aspartate 28, histidine 99, and 121 to 123 (YSS).

It belongs to the RbsD / FucU family. RbsD subfamily. In terms of assembly, homodecamer.

The protein localises to the cytoplasm. It carries out the reaction beta-D-ribopyranose = beta-D-ribofuranose. It functions in the pathway carbohydrate metabolism; D-ribose degradation; D-ribose 5-phosphate from beta-D-ribopyranose: step 1/2. Its function is as follows. Catalyzes the interconversion of beta-pyran and beta-furan forms of D-ribose. The chain is D-ribose pyranase from Pseudothermotoga lettingae (strain ATCC BAA-301 / DSM 14385 / NBRC 107922 / TMO) (Thermotoga lettingae).